The following is a 148-amino-acid chain: Snaclec convulxin subunit beta (148 aa).

Positions 1–23 are cleaved as a signal peptide; sequence MGRFIFVSFGLLVVFLSLSGSEA. 3 disulfides stabilise this stretch: Cys-27–Cys-38, Cys-55–Cys-144, and Cys-121–Cys-136. The 115-residue stretch at 34 to 148 folds into the C-type lectin domain; that stretch reads YDRYCYKVFK…TYSFVCKFEA (115 aa).

This sequence belongs to the snaclec family. Tetramer of heterodimers of alpha and beta subunits (alphabeta)(4); disulfide-linked. In terms of tissue distribution, expressed by the venom gland.

The protein localises to the secreted. In terms of biological role, snake venom lectin that activates platelets by binding to the platelet collagen receptor glycoprotein VI (GP6). The indirect activation of integrin alpha-IIb/beta-3 (ITGA2B/ITGB3) also induced by the toxin is upstream the cytoskeletal translocation of GPIb, FcRgamma (FCER1G) and 14-3-3zeta (YWHAZ). The sequence is that of Snaclec convulxin subunit beta from Crotalus durissus terrificus (South American rattlesnake).